A 189-amino-acid chain; its full sequence is Segregation and condensation protein B (189 aa).

This sequence belongs to the ScpB family. In terms of assembly, homodimer. Homodimerization may be required to stabilize the binding of ScpA to the Smc head domains. Component of a cohesin-like complex composed of ScpA, ScpB and the Smc homodimer, in which ScpA and ScpB bind to the head domain of Smc. The presence of the three proteins is required for the association of the complex with DNA.

The protein localises to the cytoplasm. Its function is as follows. Participates in chromosomal partition during cell division. May act via the formation of a condensin-like complex containing Smc and ScpA that pull DNA away from mid-cell into both cell halves. This Streptococcus sanguinis (strain SK36) protein is Segregation and condensation protein B.